The sequence spans 899 residues: Protein argonaute (899 aa).

The segment at T107–T129 is disordered. A compositionally biased stretch (gly residues) spans R116–G125. The PAZ domain maps to S229–L313. The region spanning L555–G878 is the Piwi domain.

The protein belongs to the argonaute family. Ago subfamily. In terms of assembly, interacts with miR2. Highly specific binding to the mRNA m7G-cap. May be a component of the RNA-induced silencing complex (RISC), a sequence-specific, multicomponent nuclease that destroys or silences messenger RNAs homologous to the silencing trigger.

It localises to the cytoplasm. Its function is as follows. Plays an essential role in growth and, with Dicer, also involved in microRNA (miRNA)-mediated translational repression. The RNA interference pathway is implicated in antigenic variation having a role in regulation of variant-specific surface protein (VSP)-coding gene expression. Several VSP genes are transcribed but only transcripts encoding the VSP to be expressed accumulate. Antisense RNAs corresponding to the silenced VSP genes are detected. The protein is Protein argonaute of Giardia intestinalis (strain ATCC 50581 / GS clone H7) (Giardia lamblia).